Here is an 813-residue protein sequence, read N- to C-terminus: MTNISSIPATSRSPTRVLRFLDRTLRLIASPQQRRLTRYRALADRILALDGETRALSDAALRQRADDLRHRARAGASLDALTIPTFALVREAARRTLGEAHVVEQLIGALALRDGAIAEMKTGEGKTLTATLVAALHALAGRGVHLAAPNDYLAARDADWMRPIYALLGFGVGLITPEIDDDARRAAYACDVTYGVASEFGLDFLRDHLKFCADETVQRGHGFALVDEADATLIDDAGVPLALDGPLGDQSDFYHAVDAIVAALTPEHYELDQRRRVALTDAGYDAIDHALRQAGLLKPDASLHDTASIALLHHVMQALRARTLLKRDRDYVVAHDEVVIVDAFTGRMLPGRRYDDALHQALEAKENCPIGEETRTLASITFQSYFRRYDKLAGMTGTAGDEIEEYRQIYGLDVVAIPPHRPMIRRDAQMLHRTRDEALAAVLAELEAAHAIGQPVLIGTPSIAACDRVAATLEANGWQRSRDRGPRRFAVLNAKHHADEARIIAQAGRPFAVTLATAMAGRGTDIKLGGTPFDAALQAQARGAGGLLVIGTEHHAHRRRDAQLRGRAGRQGDPGRSVVHASIDDELLRGHPAPVSAGNGPMEPATAQRLIDAAQRRREARSFDQRLALSRFDAVIERQRDALIAQRAAIRDDPAPLQLVAQLRNDTIDDLMQQFAPPQAAWDIENLDAAVRSILTLAVPIAEPGDDRAAAAIALQARIGAIADDWMAGKVHAIGEAAIGAILRRVMLALLDQLWTEQTERLEHLKRMIGDRHLPPHRLLPEFQLEAFALFELLAKEFRHEVTAHAMRLGRPS.

ATP is bound by residues Gln105, 123-127 (GEGKT), and Asp525.

Belongs to the SecA family. In terms of assembly, monomer and homodimer. Part of the essential Sec protein translocation apparatus which comprises SecA, SecYEG and auxiliary proteins SecDF-YajC and YidC.

Its subcellular location is the cell inner membrane. It localises to the cytoplasm. It catalyses the reaction ATP + H2O + cellular proteinSide 1 = ADP + phosphate + cellular proteinSide 2.. Part of the Sec protein translocase complex. Interacts with the SecYEG preprotein conducting channel. Has a central role in coupling the hydrolysis of ATP to the transfer of proteins into and across the cell membrane, serving both as a receptor for the preprotein-SecB complex and as an ATP-driven molecular motor driving the stepwise translocation of polypeptide chains across the membrane. This chain is Protein translocase subunit SecA 2, found in Rhodopseudomonas palustris (strain BisA53).